A 671-amino-acid polypeptide reads, in one-letter code: Condensin complex subunit 2 (671 aa).

Residues 1–24 (MDESLTPNPKQKPASTTTRIQAPT) show a composition bias toward polar residues. Disordered stretches follow at residues 1–33 (MDES…GSND), 404–444 (NSWA…KQAE), and 510–564 (RRKN…ISQP). Residues 406 to 415 (WAGPDHWKYR) carry the Kleisin-gamma middle domain (GM domain) involved in chromosome-binding motif. A compositionally biased stretch (acidic residues) spans 536–556 (VYDDDDGPFDDNENDQSDAED).

The protein belongs to the CND2 (condensin subunit 2) family. As to quaternary structure, component of the condensin complex. Mostly expressed in flower buds and flowers, and, to a lower extent, in roots, stems, leaves and seedlings.

It is found in the cytoplasm. The protein resides in the chromosome. In terms of biological role, regulatory subunit of the condensin complex, a complex required for conversion of interphase chromatin into mitotic-like condense chromosomes. The condensin complex probably introduces positive supercoils into relaxed DNA in the presence of type I topoisomerases and converts nicked DNA into positive knotted forms in the presence of type II topoisomerases. Essential protein. In Arabidopsis thaliana (Mouse-ear cress), this protein is Condensin complex subunit 2 (CAPH).